We begin with the raw amino-acid sequence, 737 residues long: Protein OPG064 (737 aa).

N-acetylmethionine; by host is present on M1. A disulfide bridge links C496 with C535.

The protein belongs to the orthopoxvirus OPG064 family. As to quaternary structure, interacts with host KLC2; this interaction promotes IEV trafficking by engaging the host kinesin-1 complex. Interacts with protein OPG056. N-acetylated on initiator methionine by host.

In terms of biological role, plays a role in intracellular enveloped virus (IEV) transport to the cell surface on microtubules. Together with protein OPG056, forms a complex that interacts with host KLC2 (kinesin light chain isoform 2) to engage the kinesin-1 complex and thereby promote IEV trafficking. This is Protein OPG064 (OPG064) from Monkeypox virus.